Reading from the N-terminus, the 92-residue chain is UPF0297 protein TTE1249 (92 aa).

This sequence belongs to the UPF0297 family.

The protein is UPF0297 protein TTE1249 of Caldanaerobacter subterraneus subsp. tengcongensis (strain DSM 15242 / JCM 11007 / NBRC 100824 / MB4) (Thermoanaerobacter tengcongensis).